A 439-amino-acid chain; its full sequence is Putative myrosinase 3 (439 aa).

An N-terminal signal peptide occupies residues 1 to 19 (MKFRALGLVLLLAVETCKA). Asn-33 is a glycosylation site (N-linked (GlcNAc...) asparagine). Residues His-145, 190 to 191 (NQ), and Tyr-316 contribute to the a beta-D-glucoside site. Asn-336 is a glycosylation site (N-linked (GlcNAc...) asparagine). Residues Glu-386 and Trp-404 each coordinate a beta-D-glucoside. The Nucleophile role is filled by Glu-386.

This sequence belongs to the glycosyl hydrolase 1 family. In terms of tissue distribution, expressed specifically in stamens and petals.

It catalyses the reaction a thioglucoside + H2O = a sugar + a thiol.. The polypeptide is Putative myrosinase 3 (Arabidopsis thaliana (Mouse-ear cress)).